Reading from the N-terminus, the 239-residue chain is Acidic leucine-rich nuclear phosphoprotein 32 family member B (239 aa).

LRR repeat units follow at residues 16-40, 43-64, 65-87, and 89-110; these read AADAKELVLDNCRSDDGKIIGLTSE, SLEFLSMINVNLLSVANLPKLP, KLKKLELSDNRISGGLEVLAERT, and NLTHLNLSGNKIKEINTLEPLK. Residues 123 to 165 form the LRRCT domain; sequence CEVTMLNNYRESVFELLPKLTFLDGFDADDQEAPDSDPEAEDL. Residues 149 to 215 are compositionally biased toward acidic residues; it reads DADDQEAPDS…EEDEDDEDVP (67 aa). Positions 149 to 239 are disordered; sequence DADDQEAPDS…EEEEDDEDDE (91 aa). Residues 216–225 show a composition bias toward basic and acidic residues; sequence QGEKRKRDLS. The segment covering 226-239 has biased composition (acidic residues); it reads DEGEEEEEDDEDDE.

It belongs to the ANP32 family.

Its subcellular location is the nucleus. In terms of biological role, multifunctional protein working as a cell cycle progression factor as well as a cell survival factor. Required for the progression from the G1 to the S phase. Anti-apoptotic protein which functions as a caspase-3 inhibitor. Has no phosphatase 2A (PP2A) inhibitor activity. Exhibits histone chaperone properties, stimulating core histones to assemble into a nucleosome. In Xenopus laevis (African clawed frog), this protein is Acidic leucine-rich nuclear phosphoprotein 32 family member B (anp32b).